The following is a 211-amino-acid chain: Uracil phosphoribosyltransferase (211 aa).

Residues Arg-79, Arg-104, and 131–139 (DPMLATGGS) contribute to the 5-phospho-alpha-D-ribose 1-diphosphate site. Uracil is bound by residues Ile-196 and 201–203 (GDA). Asp-202 contributes to the 5-phospho-alpha-D-ribose 1-diphosphate binding site.

Belongs to the UPRTase family. The cofactor is Mg(2+).

The enzyme catalyses UMP + diphosphate = 5-phospho-alpha-D-ribose 1-diphosphate + uracil. It participates in pyrimidine metabolism; UMP biosynthesis via salvage pathway; UMP from uracil: step 1/1. With respect to regulation, allosterically activated by GTP. In terms of biological role, catalyzes the conversion of uracil and 5-phospho-alpha-D-ribose 1-diphosphate (PRPP) to UMP and diphosphate. The sequence is that of Uracil phosphoribosyltransferase from Lactococcus lactis subsp. cremoris (strain SK11).